We begin with the raw amino-acid sequence, 277 residues long: Large ribosomal subunit protein uL2 (277 aa).

Residues 211 to 277 are disordered; it reads SRWKGVRPTV…KLIVRGRKKK (67 aa).

It belongs to the universal ribosomal protein uL2 family. As to quaternary structure, part of the 50S ribosomal subunit. Forms a bridge to the 30S subunit in the 70S ribosome.

Its function is as follows. One of the primary rRNA binding proteins. Required for association of the 30S and 50S subunits to form the 70S ribosome, for tRNA binding and peptide bond formation. It has been suggested to have peptidyltransferase activity; this is somewhat controversial. Makes several contacts with the 16S rRNA in the 70S ribosome. The polypeptide is Large ribosomal subunit protein uL2 (Staphylococcus epidermidis (strain ATCC 35984 / DSM 28319 / BCRC 17069 / CCUG 31568 / BM 3577 / RP62A)).